The sequence spans 885 residues: Alanine--tRNA ligase (885 aa).

Histidine 571, histidine 575, cysteine 674, and histidine 678 together coordinate Zn(2+).

This sequence belongs to the class-II aminoacyl-tRNA synthetase family. It depends on Zn(2+) as a cofactor.

Its subcellular location is the cytoplasm. The enzyme catalyses tRNA(Ala) + L-alanine + ATP = L-alanyl-tRNA(Ala) + AMP + diphosphate. Functionally, catalyzes the attachment of alanine to tRNA(Ala) in a two-step reaction: alanine is first activated by ATP to form Ala-AMP and then transferred to the acceptor end of tRNA(Ala). Also edits incorrectly charged Ser-tRNA(Ala) and Gly-tRNA(Ala) via its editing domain. This Clavibacter sepedonicus (Clavibacter michiganensis subsp. sepedonicus) protein is Alanine--tRNA ligase.